We begin with the raw amino-acid sequence, 508 residues long: Glycerol kinase (508 aa).

Thr14 lines the ADP pocket. ATP contacts are provided by Thr14, Thr15, and Ser16. Thr14 is a binding site for sn-glycerol 3-phosphate. Arg18 provides a ligand contact to ADP. Sn-glycerol 3-phosphate-binding residues include Arg84, Glu85, and Tyr136. Residues Arg84, Glu85, and Tyr136 each contribute to the glycerol site. At His232 the chain carries Phosphohistidine; by HPr. Asp246 contributes to the sn-glycerol 3-phosphate binding site. Glycerol is bound by residues Asp246 and Gln247. 2 residues coordinate ADP: Thr268 and Gly311. 4 residues coordinate ATP: Thr268, Gly311, Gln315, and Gly412. 2 residues coordinate ADP: Gly412 and Asn416.

The protein belongs to the FGGY kinase family. As to quaternary structure, homotetramer and homodimer (in equilibrium). The phosphoenolpyruvate-dependent sugar phosphotransferase system (PTS), including enzyme I, and histidine-containing protein (HPr) are required for the phosphorylation, which leads to the activation of the enzyme.

The catalysed reaction is glycerol + ATP = sn-glycerol 3-phosphate + ADP + H(+). Its pathway is polyol metabolism; glycerol degradation via glycerol kinase pathway; sn-glycerol 3-phosphate from glycerol: step 1/1. Its activity is regulated as follows. Activated by phosphorylation and inhibited by fructose 1,6-bisphosphate (FBP). In terms of biological role, key enzyme in the regulation of glycerol uptake and metabolism. Catalyzes the phosphorylation of glycerol to yield sn-glycerol 3-phosphate. This Streptococcus pyogenes serotype M28 (strain MGAS6180) protein is Glycerol kinase.